A 786-amino-acid chain; its full sequence is DNA ligase (786 aa).

Residues 32-36, 81-82, and glutamate 121 contribute to the NAD(+) site; these read DAEYD and SL. The active-site N6-AMP-lysine intermediate is the lysine 123. Positions 144, 181, 297, and 321 each coordinate NAD(+). Residues cysteine 415, cysteine 418, cysteine 445, and cysteine 451 each coordinate Zn(2+). The region spanning 703-786 is the BRCT domain; the sequence is AEGLPLAGQT…EQLKSYGIEA (84 aa).

It belongs to the NAD-dependent DNA ligase family. LigA subfamily. The cofactor is Mg(2+). Requires Mn(2+) as cofactor.

The catalysed reaction is NAD(+) + (deoxyribonucleotide)n-3'-hydroxyl + 5'-phospho-(deoxyribonucleotide)m = (deoxyribonucleotide)n+m + AMP + beta-nicotinamide D-nucleotide.. Functionally, DNA ligase that catalyzes the formation of phosphodiester linkages between 5'-phosphoryl and 3'-hydroxyl groups in double-stranded DNA using NAD as a coenzyme and as the energy source for the reaction. It is essential for DNA replication and repair of damaged DNA. This chain is DNA ligase, found in Ectopseudomonas mendocina (strain ymp) (Pseudomonas mendocina).